Reading from the N-terminus, the 351-residue chain is Fe(3+) ions import ATP-binding protein FbpC (351 aa).

Residues 7–237 (VELKNVTKRF…PASEFMASFM (231 aa)) form the ABC transporter domain. 39 to 46 (GPSGCGKT) serves as a coordination point for ATP.

The protein belongs to the ABC transporter superfamily. Fe(3+) ion importer (TC 3.A.1.10) family. In terms of assembly, the complex is composed of two ATP-binding proteins (FbpC), two transmembrane proteins (FbpB) and a solute-binding protein (FbpA).

It localises to the cell inner membrane. It catalyses the reaction Fe(3+)(out) + ATP + H2O = Fe(3+)(in) + ADP + phosphate + H(+). In terms of biological role, part of the ABC transporter complex FbpABC involved in Fe(3+) ions import. Responsible for energy coupling to the transport system. This Photorhabdus laumondii subsp. laumondii (strain DSM 15139 / CIP 105565 / TT01) (Photorhabdus luminescens subsp. laumondii) protein is Fe(3+) ions import ATP-binding protein FbpC.